Here is a 945-residue protein sequence, read N- to C-terminus: Netrin receptor UNC5B (945 aa).

Residues 1 to 26 form the signal peptide; the sequence is MGARSGARGALLLALLLCWDPRLSQA. At 27 to 377 the chain is on the extracellular side; that stretch reads GTDSGSEVLP…LEASGDAALY (351 aa). One can recognise an Ig-like domain in the interval 48-145; sequence PYFLQEPQDA…AGTTKSRRAY (98 aa). Intrachain disulfides connect Cys69-Cys130, Cys81-Cys128, Cys174-Cys225, Cys258-Cys295, Cys262-Cys299, Cys273-Cys285, Cys314-Cys348, Cys318-Cys353, and Cys326-Cys338. The region spanning 147–242 is the Ig-like C2-type domain; it reads RIAYLRKNFD…KRRSTTATVI (96 aa). A glycan (N-linked (GlcNAc...) asparagine) is linked at Asn222. TSP type-1 domains follow at residues 246–300 and 302–354; these read NGGW…TICP and DGAW…GLCM. Asn347 carries N-linked (GlcNAc...) asparagine glycosylation. The helical transmembrane segment at 378–398 threads the bilayer; the sequence is AGLVVAIFVVVAILMAVGVVV. Over 399 to 945 the chain is Cytoplasmic; it reads YRRNCRDFDT…LVAVATDGDC (547 aa). Cys403 carries the S-palmitoyl cysteine lipid modification. In terms of domain architecture, ZU5 spans 543 to 686; sequence SSVSGTFGCL…LGTYVFTGES (144 aa). Residue Tyr581 is modified to Phosphotyrosine. Residues 689–838 are UPA domain; the sequence is RSAVKRLQLA…AETPAGSLDT (150 aa). Residues 707 to 725 form an interaction with DCC region; it reads SLEYSLRVYCLEDTPVALK. In terms of domain architecture, Death spans 865 to 943; it reads KICNSLDAPN…EMLVAVATDG (79 aa).

The protein belongs to the unc-5 family. As to quaternary structure, interacts with the cytoplasmic part of DCC. Interacts with GNAI2 via its cytoplasmic part. Interacts (via death domain) with DAPK1 (via death domain). Interacts (via extracellular domain) with FLRT3 (via extracellular domain); the interaction is direct. Interacts (via extracellular domain) with FLRT2 and FLRT3 (via extracellular domain), but has higher affinity for FLRT3. Identified in a complex with FLRT3 and ADGRL3; does not interact with ADGRL3 by itself. Post-translationally, phosphorylated on cytoplasmic tyrosine residues. Proteolytically cleaved by caspases during apoptosis. The cleavage does not take place when the receptor is associated with netrin ligand. Its cleavage by caspases is required to induce apoptosis. In terms of processing, palmitoylation is required for pro-apoptotic activity, but not for location at lipid rafts. Highly expressed in brain. Also expressed at lower level in developing lung, cartilage, kidney and hematopoietic and immune tissues.

The protein resides in the cell membrane. The protein localises to the membrane raft. Receptor for netrin required for axon guidance. Mediates axon repulsion of neuronal growth cones in the developing nervous system upon ligand binding. Axon repulsion in growth cones may be caused by its association with DCC that may trigger signaling for repulsion. Functions as a netrin receptor that negatively regulates vascular branching during angiogenesis. Mediates retraction of tip cell filopodia on endothelial growth cones in response to netrin. It also acts as a dependence receptor required for apoptosis induction when not associated with netrin ligand. Mediates apoptosis by activating DAPK1. In the absence of NTN1, activates DAPK1 by reducing its autoinhibitory phosphorylation at Ser-308 thereby increasing its catalytic activity. This Homo sapiens (Human) protein is Netrin receptor UNC5B (UNC5B).